The chain runs to 491 residues: Aspartyl/glutamyl-tRNA(Asn/Gln) amidotransferase subunit B (491 aa).

Belongs to the GatB/GatE family. GatB subfamily. As to quaternary structure, heterotrimer of A, B and C subunits.

The catalysed reaction is L-glutamyl-tRNA(Gln) + L-glutamine + ATP + H2O = L-glutaminyl-tRNA(Gln) + L-glutamate + ADP + phosphate + H(+). It carries out the reaction L-aspartyl-tRNA(Asn) + L-glutamine + ATP + H2O = L-asparaginyl-tRNA(Asn) + L-glutamate + ADP + phosphate + 2 H(+). Allows the formation of correctly charged Asn-tRNA(Asn) or Gln-tRNA(Gln) through the transamidation of misacylated Asp-tRNA(Asn) or Glu-tRNA(Gln) in organisms which lack either or both of asparaginyl-tRNA or glutaminyl-tRNA synthetases. The reaction takes place in the presence of glutamine and ATP through an activated phospho-Asp-tRNA(Asn) or phospho-Glu-tRNA(Gln). The polypeptide is Aspartyl/glutamyl-tRNA(Asn/Gln) amidotransferase subunit B (Paraburkholderia phymatum (strain DSM 17167 / CIP 108236 / LMG 21445 / STM815) (Burkholderia phymatum)).